The chain runs to 203 residues: Nucleoside triphosphate pyrophosphatase (203 aa).

Residue D80 is the Proton acceptor of the active site.

Belongs to the Maf family. Requires a divalent metal cation as cofactor.

The protein resides in the cytoplasm. The catalysed reaction is a ribonucleoside 5'-triphosphate + H2O = a ribonucleoside 5'-phosphate + diphosphate + H(+). The enzyme catalyses a 2'-deoxyribonucleoside 5'-triphosphate + H2O = a 2'-deoxyribonucleoside 5'-phosphate + diphosphate + H(+). In terms of biological role, nucleoside triphosphate pyrophosphatase. May have a dual role in cell division arrest and in preventing the incorporation of modified nucleotides into cellular nucleic acids. The chain is Nucleoside triphosphate pyrophosphatase from Gluconobacter oxydans (strain 621H) (Gluconobacter suboxydans).